Here is a 204-residue protein sequence, read N- to C-terminus: N-(5'-phosphoribosyl)anthranilate isomerase (204 aa).

This sequence belongs to the TrpF family.

The catalysed reaction is N-(5-phospho-beta-D-ribosyl)anthranilate = 1-(2-carboxyphenylamino)-1-deoxy-D-ribulose 5-phosphate. The protein operates within amino-acid biosynthesis; L-tryptophan biosynthesis; L-tryptophan from chorismate: step 3/5. This is N-(5'-phosphoribosyl)anthranilate isomerase from Bacillus mycoides (strain KBAB4) (Bacillus weihenstephanensis).